The following is a 286-amino-acid chain: 2-dehydro-3-deoxyphosphooctonate aldolase (286 aa).

The protein belongs to the KdsA family.

It localises to the cytoplasm. The catalysed reaction is D-arabinose 5-phosphate + phosphoenolpyruvate + H2O = 3-deoxy-alpha-D-manno-2-octulosonate-8-phosphate + phosphate. The protein operates within carbohydrate biosynthesis; 3-deoxy-D-manno-octulosonate biosynthesis; 3-deoxy-D-manno-octulosonate from D-ribulose 5-phosphate: step 2/3. It participates in bacterial outer membrane biogenesis; lipopolysaccharide biosynthesis. The sequence is that of 2-dehydro-3-deoxyphosphooctonate aldolase from Bradyrhizobium sp. (strain BTAi1 / ATCC BAA-1182).